The following is a 302-amino-acid chain: Probable histone acetyltransferase Rv0428c (302 aa).

It carries out the reaction L-lysyl-[histone] + acetyl-CoA = N(6)-acetyl-L-lysyl-[histone] + CoA + H(+). Functionally, shows histone acetyl transferase (HAT) activity with recombinant eukaryotic H3 histone expressed in bacteria as substrate and acetyl-CoA as donor. May be involved in survival under stress conditions. This chain is Probable histone acetyltransferase Rv0428c, found in Mycobacterium tuberculosis (strain ATCC 25618 / H37Rv).